Reading from the N-terminus, the 338-residue chain is Cell division protein ZipA (338 aa).

The Periplasmic portion of the chain corresponds to 1 to 2; the sequence is MS. A helical transmembrane segment spans residues 3–23; sequence LREWLIAIGTLVIIGIVIDGV. Topologically, residues 24–338 are cytoplasmic; the sequence is RRMRRARKES…FERKQRSQRA (315 aa). Positions 33-192 are disordered; it reads SMAISSGMGA…RKNQPLAGAN (160 aa). Basic and acidic residues-rich tracts occupy residues 70–81 and 138–162; these read TLEDRGYLKRDM and EVDR…RAEE.

This sequence belongs to the ZipA family. As to quaternary structure, interacts with FtsZ via their C-terminal domains.

Its subcellular location is the cell inner membrane. Functionally, essential cell division protein that stabilizes the FtsZ protofilaments by cross-linking them and that serves as a cytoplasmic membrane anchor for the Z ring. Also required for the recruitment to the septal ring of downstream cell division proteins. This is Cell division protein ZipA from Marinobacter nauticus (strain ATCC 700491 / DSM 11845 / VT8) (Marinobacter aquaeolei).